A 339-amino-acid chain; its full sequence is Photosystem II assembly lipoprotein Ycf48 (339 aa).

The N-terminal stretch at 1–23 is a signal peptide; it reads MNRLIKFSFNLILIFVLGLGLSG. Cys-24 carries N-palmitoyl cysteine lipidation. A lipid anchor (S-diacylglycerol cysteine) is attached at Cys-24.

It belongs to the Ycf48 family. Part of early PSII assembly complexes which includes D1 (psbA) and PsbI; not found in mature PSII. Binds to the lumenal side of PSII complexes. Interacts with YidC.

The protein resides in the cellular thylakoid membrane. In terms of biological role, a factor required for optimal assembly of photosystem II (PSII), acting in the early stages of PSII assembly. Also plays a role in replacement of photodamaged D1 (psbA). Assists YidC in synthesis of chlorophyll-binding proteins. The chain is Photosystem II assembly lipoprotein Ycf48 from Prochlorococcus marinus (strain SARG / CCMP1375 / SS120).